The primary structure comprises 589 residues: Inactive poly [ADP-ribose] polymerase RCD1 (589 aa).

The WWE domain occupies 64-153; that stretch reads KLSAYENRSG…ETGAKTPLAW (90 aa). The region spanning 248 to 469 is the PARP catalytic domain; that stretch reads EAAVSKWDET…LIAKRDNSGV (222 aa). Disordered stretches follow at residues 464–504 and 569–589; these read RDNS…TRPK and QPKSKEIPGSIRDHEEGAGGL. The segment covering 481–503 has biased composition (polar residues); the sequence is LESNQGARGSGSANSVGSSTTRP. Residues 501-572 form the RST domain; it reads TRPKSPWMPF…ITTLQNQPKS (72 aa). Basic and acidic residues predominate over residues 571–589; the sequence is KSKEIPGSIRDHEEGAGGL.

As to quaternary structure, interacts with the transcription factors NAC013/NTL1 and NAC046. Interacts with dehydration-responsive DREB2 proteins and a number of transcription factors belonging to several protein families. Interacts with turnip crinkle virus (TCV) movement protein P8. As to expression, expressed in young developing tissues, such as young leaves and flowers and root tips. In mature plants, expressed in vasculature of leaves and roots, and guard cells.

It localises to the nucleus matrix. In terms of biological role, inactive ADP-ribosyltransferase that functions with SRO1 to regulate oxidative stress, hormonal and developmental responses. Required for embryogenesis, vegetative and reproductive development, and abiotic stress responses. May regulate several stress-responsive genes. Seems to play a larger developmental role than SRO1. Does not bind NAD in vitro. This Arabidopsis thaliana (Mouse-ear cress) protein is Inactive poly [ADP-ribose] polymerase RCD1 (RCD1).